The sequence spans 386 residues: Succinate--CoA ligase [ADP-forming] subunit beta (386 aa).

The ATP-grasp domain occupies 9–244 (KELLKQFGVT…LDEEDPAEIE (236 aa)). Residues Lys46, 53–55 (GRG), Glu99, Ala102, and Glu107 contribute to the ATP site. Residues Asn199 and Asp213 each contribute to the Mg(2+) site. Residues Asn264 and 321 to 323 (GIM) contribute to the substrate site.

Belongs to the succinate/malate CoA ligase beta subunit family. As to quaternary structure, heterotetramer of two alpha and two beta subunits. It depends on Mg(2+) as a cofactor.

It carries out the reaction succinate + ATP + CoA = succinyl-CoA + ADP + phosphate. The catalysed reaction is GTP + succinate + CoA = succinyl-CoA + GDP + phosphate. The protein operates within carbohydrate metabolism; tricarboxylic acid cycle; succinate from succinyl-CoA (ligase route): step 1/1. Its function is as follows. Succinyl-CoA synthetase functions in the citric acid cycle (TCA), coupling the hydrolysis of succinyl-CoA to the synthesis of either ATP or GTP and thus represents the only step of substrate-level phosphorylation in the TCA. The beta subunit provides nucleotide specificity of the enzyme and binds the substrate succinate, while the binding sites for coenzyme A and phosphate are found in the alpha subunit. This is Succinate--CoA ligase [ADP-forming] subunit beta from Bordetella pertussis (strain Tohama I / ATCC BAA-589 / NCTC 13251).